A 2025-amino-acid polypeptide reads, in one-letter code: E3 ubiquitin-protein ligase TTC3 (2025 aa).

Residues Met1 to Glu230 are interaction with POLG. TPR repeat units follow at residues Gly231–Asn264 and Leu266–Trp298. Ser378 carries the phosphoserine; by PKB/AKT2 modification. The segment at Asp423–Leu458 is disordered. TPR repeat units follow at residues Val536–Glu572 and Cys576–Leu609. The interval Glu786–Glu805 is disordered. Residues Arg793–Glu805 show a composition bias toward basic and acidic residues. The residue at position 1009 (Ser1009) is a Phosphoserine. Disordered stretches follow at residues Ala1012 to Ala1068, Lys1215 to Ser1295, Asp1773 to Lys1842, and Ile1894 to Glu1944. The span at Val1019–Lys1029 shows a compositional bias: basic residues. A compositionally biased stretch (polar residues) spans Ser1038–Ser1052. Ser1061 is subject to Phosphoserine. Residues Ile1894–Tyr1912 are compositionally biased toward basic and acidic residues. A compositionally biased stretch (polar residues) spans Glu1913 to Pro1928. An RING-type zinc finger spans residues Cys1957 to Gln1997. The disordered stretch occupies residues Glu2004–Arg2025. The segment covering Pro2013–Arg2025 has biased composition (polar residues).

Interacts (when phosphorylated on Ser-378) with AKT1, AKT2 and AKT3 (when phosphorylated). Interacts with CIT. Interacts with POLG. Interacts with HSP70. Interacts with SMURF2. Phosphorylation on Ser-378 by Akt is required for ubiquitin ligase activity. In terms of processing, proteolytically cleaved into differently sized N- and C-terminal fragments. In terms of tissue distribution, found in all tissues examined.

The protein resides in the nucleus. The protein localises to the cytoplasm. It is found in the golgi apparatus. It catalyses the reaction S-ubiquitinyl-[E2 ubiquitin-conjugating enzyme]-L-cysteine + [acceptor protein]-L-lysine = [E2 ubiquitin-conjugating enzyme]-L-cysteine + N(6)-ubiquitinyl-[acceptor protein]-L-lysine.. It functions in the pathway protein modification; protein ubiquitination. In terms of biological role, E3 ubiquitin-protein ligase which catalyzes the formation of 'Lys-48'-polyubiquitin chains. Mediates the ubiquitination and subsequent degradation of phosphorylated Akt (AKT1, AKT2 and AKT3) in the nucleus. Acts as a terminal regulator of Akt signaling after activation; its phosphorylation by Akt, which is a prerequisite for ubiquitin ligase activity, suggests the existence of a regulation mechanism required to control Akt levels after activation. Positively regulates TGFB1-induced epithelial-mesenchymal transition and myofibroblast differentiation by mediating the ubiquitination and subsequent degradation of SMURF2. Regulates neuronal differentiation by regulating actin remodeling and Golgi organization via a signaling cascade involving RHOA, CIT and ROCK. Inhibits cell proliferation. The polypeptide is E3 ubiquitin-protein ligase TTC3 (TTC3) (Homo sapiens (Human)).